A 627-amino-acid chain; its full sequence is Pheromone B alpha 2 receptor (627 aa).

Residues 1-7 lie on the Extracellular side of the membrane; sequence MLDPTYP. A helical membrane pass occupies residues 8–28; that stretch reads AFPIFAFLGIVCCLVPLPWHL. Topologically, residues 29 to 35 are cytoplasmic; it reads QSWNSGT. The chain crosses the membrane as a helical span at residues 36–56; it reads CFLMIWTAVACLNMFVNSIIW. The Extracellular portion of the chain corresponds to 57-69; sequence KDHAQNVAPVWCE. The chain crosses the membrane as a helical span at residues 70-90; the sequence is ISIRITLGASVGIPASSLCIV. At 91–102 the chain is on the cytoplasmic side; the sequence is RRLYSIAKKFRA. A helical transmembrane segment spans residues 103–123; that stretch reads VMVDALICVLFPILYIILQIV. Over 124–150 the chain is Extracellular; sequence VQGHRFNILENIGCFPAIINTPLTYPL. The chain crosses the membrane as a helical span at residues 151–171; sequence TFMWPVLIGVISFIYSTLALI. The Cytoplasmic portion of the chain corresponds to 172 to 197; that stretch reads QFNRHRLQFTQFLHSNSTLSVSRYLR. The chain crosses the membrane as a helical span at residues 198 to 218; sequence LMALAMTEMMCTTPMGVFVII. At 219–260 the chain is on the extracellular side; it reads LNAKATPVSPYVSWAVTHYGYGRIDQVPAIIWRSNRLLVASY. The helical transmembrane segment at 261 to 281 threads the bilayer; the sequence is ELTRWSSPAIALIFFFYFGFA. The Cytoplasmic segment spans residues 282–627; sequence QEARRNYAAA…ASPRTHRASV (346 aa). Disordered stretches follow at residues 363 to 405, 479 to 505, and 518 to 627; these read LPRP…SSPI, TVPQ…SSSA, and LPST…RASV. Low complexity predominate over residues 372-387; it reads SSSGFSSSDSTRFGSS. 2 stretches are compositionally biased toward polar residues: residues 519 to 533 and 545 to 555; these read PSTT…SLPT and SLSQLFGISSM. The segment covering 569–607 has biased composition (low complexity); that stretch reads ATGTASPTTTAPAPASTTIAPASATMAPATTTTAPTTIA.

The protein belongs to the G-protein coupled receptor 4 family.

The protein localises to the cell membrane. Functionally, receptor for the BAP2 pheromone, a prenylated mating factor. The receptor/pheromone interaction may have a role in the fusion of clamp cells. The polypeptide is Pheromone B alpha 2 receptor (BAR2) (Schizophyllum commune (Split gill fungus)).